Reading from the N-terminus, the 155-residue chain is Cyanate hydratase (155 aa).

Active-site residues include R95, E98, and S121.

The protein belongs to the cyanase family.

The catalysed reaction is cyanate + hydrogencarbonate + 3 H(+) = NH4(+) + 2 CO2. Its function is as follows. Catalyzes the reaction of cyanate with bicarbonate to produce ammonia and carbon dioxide. The chain is Cyanate hydratase from Pseudomonas savastanoi pv. phaseolicola (strain 1448A / Race 6) (Pseudomonas syringae pv. phaseolicola (strain 1448A / Race 6)).